The sequence spans 324 residues: Anthranilate phosphoribosyltransferase (324 aa).

5-phospho-alpha-D-ribose 1-diphosphate-binding positions include G75, 78–79 (GD), T83, 85–88 (NVST), 102–110 (KHGNFGITG), and S114. G75 contributes to the anthranilate binding site. S87 lines the Mg(2+) pocket. An anthranilate-binding site is contributed by N105. R160 lines the anthranilate pocket. Mg(2+) contacts are provided by D216 and E217.

The protein belongs to the anthranilate phosphoribosyltransferase family. In terms of assembly, homodimer. Requires Mg(2+) as cofactor.

It carries out the reaction N-(5-phospho-beta-D-ribosyl)anthranilate + diphosphate = 5-phospho-alpha-D-ribose 1-diphosphate + anthranilate. It participates in amino-acid biosynthesis; L-tryptophan biosynthesis; L-tryptophan from chorismate: step 2/5. In terms of biological role, catalyzes the transfer of the phosphoribosyl group of 5-phosphorylribose-1-pyrophosphate (PRPP) to anthranilate to yield N-(5'-phosphoribosyl)-anthranilate (PRA). The polypeptide is Anthranilate phosphoribosyltransferase (Picrophilus torridus (strain ATCC 700027 / DSM 9790 / JCM 10055 / NBRC 100828 / KAW 2/3)).